A 333-amino-acid chain; its full sequence is 1D-myo-inositol 2-acetamido-2-deoxy-alpha-D-glucopyranoside deacetylase (333 aa).

Residues His18, Asp21, and His165 each coordinate Zn(2+).

Belongs to the MshB deacetylase family. The cofactor is Zn(2+).

The catalysed reaction is 1D-myo-inositol 2-acetamido-2-deoxy-alpha-D-glucopyranoside + H2O = 1D-myo-inositol 2-amino-2-deoxy-alpha-D-glucopyranoside + acetate. In terms of biological role, catalyzes the deacetylation of 1D-myo-inositol 2-acetamido-2-deoxy-alpha-D-glucopyranoside (GlcNAc-Ins) in the mycothiol biosynthesis pathway. In Corynebacterium jeikeium (strain K411), this protein is 1D-myo-inositol 2-acetamido-2-deoxy-alpha-D-glucopyranoside deacetylase.